Here is a 106-residue protein sequence, read N- to C-terminus: Ribosomal protein eL42-like (106 aa).

A disordered region spans residues 26 to 53 (YKKGKDSLYAQGRRRYDRKQSGYGGQTK). The residue at position 53 (lysine 53) is an N6-methyllysine.

It belongs to the eukaryotic ribosomal protein eL42 family. As to expression, ubiquitously expressed.

The protein localises to the cytoplasm. The protein is Ribosomal protein eL42-like (RPL36AL) of Homo sapiens (Human).